The sequence spans 427 residues: MSVSFENKETNRGVLTFTISQDQIKPELDRVFKSVKKSLNVPGFRKGHLPRPIFDKKFGEESLYQDVMNALLPNAYEAAVKEAGLEVVAQPKIDVTSMEKGQDWVIAAEVVTKPEVKLGDYKNLEVSVDVEKEVTDADVEERIERERNNLAELVIKEAAAEDGDTVVIDFVGSIDGVEFDGGKGENFSLGLGSGQFIPGFEDQLVGHSAGETVDVIVTFPEDYQAEDLAGKEAKFVTTIHEVKAKEVPALDDELAKDIDEEVETLADLKEKYRKELAAAKEEAYKDAVEGAAIDTAVENAEIVELPEEMIHEEVHRSVNEFLGNLQRQGINPDMYFQITGTTQEDLHNQYQAEAESRTKTNLVIEAVAKAEGFDASEEEIQKEVEQLAADYNMEVAQVQNLLSADMLKHDITIKKAVELITSTATVK.

Positions 163 to 248 (GDTVVIDFVG…IHEVKAKEVP (86 aa)) constitute a PPIase FKBP-type domain.

This sequence belongs to the FKBP-type PPIase family. Tig subfamily.

The protein resides in the cytoplasm. The catalysed reaction is [protein]-peptidylproline (omega=180) = [protein]-peptidylproline (omega=0). Involved in protein export. Acts as a chaperone by maintaining the newly synthesized protein in an open conformation. Functions as a peptidyl-prolyl cis-trans isomerase. The protein is Trigger factor of Streptococcus pneumoniae (strain Taiwan19F-14).